A 351-amino-acid chain; its full sequence is Photosystem II D2 protein (351 aa).

The helical transmembrane segment at 39-59 threads the bilayer; the sequence is TAYLAIGGWLTGTTFVTSWYT. Residue His-116 participates in chlorophyll a binding. A helical membrane pass occupies residues 123-139; the sequence is GFMLRQFEIARLVGIRP. Pheophytin a-binding residues include Gln-128 and Asn-141. A helical membrane pass occupies residues 151-164; it reads VFVSVFLMYPLGQS. His-196 provides a ligand contact to chlorophyll a. A helical membrane pass occupies residues 206 to 226; the sequence is GALLCAIHGATVENTLFEDGE. Positions 213 and 260 each coordinate a plastoquinone. His-213 serves as a coordination point for Fe cation. Residue His-267 participates in Fe cation binding. A helical transmembrane segment spans residues 277–293; the sequence is GLWTSSIGIIGLALNLR.

Belongs to the reaction center PufL/M/PsbA/D family. In terms of assembly, PSII is composed of 1 copy each of membrane proteins PsbA, PsbB, PsbC, PsbD, PsbE, PsbF, PsbH, PsbI, PsbJ, PsbK, PsbL, PsbM, PsbT, PsbX, PsbY, PsbZ, Psb30/Ycf12, peripheral proteins PsbO, CyanoQ (PsbQ), PsbU, PsbV and a large number of cofactors. It forms dimeric complexes. The D1/D2 heterodimer binds P680, chlorophylls that are the primary electron donor of PSII, and subsequent electron acceptors. It shares a non-heme iron and each subunit binds pheophytin, quinone, additional chlorophylls, carotenoids and lipids. There is also a Cl(-1) ion associated with D1 and D2, which is required for oxygen evolution. The PSII complex binds additional chlorophylls, carotenoids and specific lipids. is required as a cofactor.

It is found in the cellular thylakoid membrane. It carries out the reaction 2 a plastoquinone + 4 hnu + 2 H2O = 2 a plastoquinol + O2. Functionally, photosystem II (PSII) is a light-driven water:plastoquinone oxidoreductase that uses light energy to abstract electrons from H(2)O, generating O(2) and a proton gradient subsequently used for ATP formation. It consists of a core antenna complex that captures photons, and an electron transfer chain that converts photonic excitation into a charge separation. The D1/D2 (PsbA/PsbD) reaction center heterodimer binds P680, the primary electron donor of PSII as well as several subsequent electron acceptors. D2 is needed for assembly of a stable PSII complex. This is Photosystem II D2 protein from Synechococcus sp. (strain CC9605).